Here is a 188-residue protein sequence, read N- to C-terminus: ATP synthase subunit b, chloroplastic (188 aa).

The chain crosses the membrane as a helical span at residues 35-57; that stretch reads LINLAVVIGVLVYFGKGVLTTLL.

It belongs to the ATPase B chain family. In terms of assembly, F-type ATPases have 2 components, F(1) - the catalytic core - and F(0) - the membrane proton channel. F(1) has five subunits: alpha(3), beta(3), gamma(1), delta(1), epsilon(1). F(0) has four main subunits: a(1), b(1), b'(1) and c(10-14). The alpha and beta chains form an alternating ring which encloses part of the gamma chain. F(1) is attached to F(0) by a central stalk formed by the gamma and epsilon chains, while a peripheral stalk is formed by the delta, b and b' chains.

The protein localises to the plastid. The protein resides in the chloroplast thylakoid membrane. In terms of biological role, f(1)F(0) ATP synthase produces ATP from ADP in the presence of a proton or sodium gradient. F-type ATPases consist of two structural domains, F(1) containing the extramembraneous catalytic core and F(0) containing the membrane proton channel, linked together by a central stalk and a peripheral stalk. During catalysis, ATP synthesis in the catalytic domain of F(1) is coupled via a rotary mechanism of the central stalk subunits to proton translocation. Component of the F(0) channel, it forms part of the peripheral stalk, linking F(1) to F(0). This Zygnema circumcarinatum (Green alga) protein is ATP synthase subunit b, chloroplastic.